The primary structure comprises 114 residues: Transmembrane protein 14DP (114 aa).

The next 4 membrane-spanning stretches (helical) occupy residues 8–28 (LVPL…GGIV), 36–56 (APSL…AYQL), 63–80 (VWDF…IMGM), and 83–103 (YYYG…LMAA).

Belongs to the TMEM14 family.

Its subcellular location is the membrane. In Homo sapiens (Human), this protein is Transmembrane protein 14DP (TMEM14DP).